Here is a 198-residue protein sequence, read N- to C-terminus: Glycerol-3-phosphate acyltransferase (198 aa).

4 helical membrane passes run 3–23, 81–101, 113–133, and 153–175; these read VEWL…AVIV, LFAA…FFQF, VLLG…IGVA, and YVWL…MLLV.

Belongs to the PlsY family. As to quaternary structure, probably interacts with PlsX.

The protein resides in the cell inner membrane. The catalysed reaction is an acyl phosphate + sn-glycerol 3-phosphate = a 1-acyl-sn-glycero-3-phosphate + phosphate. The protein operates within lipid metabolism; phospholipid metabolism. In terms of biological role, catalyzes the transfer of an acyl group from acyl-phosphate (acyl-PO(4)) to glycerol-3-phosphate (G3P) to form lysophosphatidic acid (LPA). This enzyme utilizes acyl-phosphate as fatty acyl donor, but not acyl-CoA or acyl-ACP. This Methylococcus capsulatus (strain ATCC 33009 / NCIMB 11132 / Bath) protein is Glycerol-3-phosphate acyltransferase.